Consider the following 261-residue polypeptide: DNA oxidative demethylase ALKBH2 (261 aa).

Positions 1–57 (MDRFLVKGAQGGLLRKQEEQEPTGEEPAVLGGDKESTRKRPRREAPGNGGHSAGPSW) are disordered. A PCNA-binding motif is present at residues 3 to 7 (RFLVK). Residues 102-104 (FGK) and 122-124 (YTF) each bind substrate. The 106-residue stretch at 152–257 (TFNFVLINRY…RVNLTFRKIL (106 aa)) folds into the Fe2OG dioxygenase domain. 2-oxoglutarate contacts are provided by Asn-159, Tyr-161, and His-171. Residues His-171 and Asp-173 each coordinate Fe cation. Asp-174 is a binding site for substrate. 2-oxoglutarate-binding residues include His-236, Arg-248, Thr-252, and Arg-254. His-236 is a Fe cation binding site.

This sequence belongs to the alkB family. In terms of assembly, interacts with PCNA homotrimer; this interaction is enhanced during the S-phase of the cell cycle. Interacts with nucleolar proteins NCL, UBTF and NPM1. Interacts with XRCC5-XRCC6 heterodimer. It depends on Fe(2+) as a cofactor. In terms of tissue distribution, detected in colon, small intestine, ovary, testis, prostate, skeletal muscle, heart, liver and urinary bladder.

The protein localises to the nucleus. It is found in the nucleolus. Its subcellular location is the nucleoplasm. It carries out the reaction a methylated nucleobase within DNA + 2-oxoglutarate + O2 = a nucleobase within DNA + formaldehyde + succinate + CO2. It catalyses the reaction an N(1)-methyl-2'-deoxyadenosine in double-stranded DNA + 2-oxoglutarate + O2 = a 2'-deoxyadenosine in double-stranded DNA + formaldehyde + succinate + CO2 + H(+). The catalysed reaction is an N(1)-methyl-2'-deoxyadenosine in single-stranded DNA + 2-oxoglutarate + O2 = a 2'-deoxyadenosine in single-stranded DNA + formaldehyde + succinate + CO2 + H(+). The enzyme catalyses an N(3)-methyl-2'-deoxycytidine in double-stranded DNA + 2-oxoglutarate + O2 = a 2'-deoxycytidine in double-stranded DNA + formaldehyde + succinate + CO2 + H(+). It carries out the reaction an N(3)-methyl-2'-deoxycytidine in single-stranded DNA + 2-oxoglutarate + O2 = a 2'-deoxycytidine in single-stranded DNA + formaldehyde + succinate + CO2 + H(+). It catalyses the reaction a 1,N(6)-etheno-2'-deoxyadenosine in double-stranded DNA + 2-oxoglutarate + O2 + H2O = a 2'-deoxyadenosine in double-stranded DNA + glyoxal + succinate + CO2. The catalysed reaction is a 1,N(6)-etheno-2'-deoxyadenosine in single-stranded DNA + 2-oxoglutarate + O2 + H2O = a 2'-deoxyadenosine in single-stranded DNA + glyoxal + succinate + CO2. The enzyme catalyses a 3,N(4)-etheno-2'-deoxycytidine in double-stranded DNA + 2-oxoglutarate + O2 + H2O = a 2'-deoxycytidine in double-stranded DNA + glyoxal + succinate + CO2. It carries out the reaction a 3,N(4)-etheno-2'-deoxycytidine in single-stranded DNA + 2-oxoglutarate + O2 + H2O = a 2'-deoxycytidine in single-stranded DNA + glyoxal + succinate + CO2. It catalyses the reaction a 1,N(2)-etheno-2'-deoxyguanosine in double-stranded DNA + 2-oxoglutarate + O2 + H2O = a 2'-deoxyguanosine in double-stranded DNA + glyoxal + succinate + CO2. Activated by ascorbate and magnesium ions. In terms of biological role, dioxygenase that repairs alkylated nucleic acid bases by direct reversal oxidative dealkylation. Can process both double-stranded (ds) and single-stranded (ss) DNA substrates, with a strong preference for dsDNA. Uses molecular oxygen, 2-oxoglutarate and iron as cofactors to oxidize the alkyl groups that are subsequently released as aldehydes, regenerating the undamaged bases. Probes the base pair stability, locates a weakened base pair and flips the damaged base to accommodate the lesion in its active site for efficient catalysis. Repairs monoalkylated bases, specifically N1-methyladenine and N3-methylcytosine, as well as higher order alkyl adducts such as bases modified with exocyclic bridged adducts known as etheno adducts including 1,N6-ethenoadenine, 3,N4-ethenocytosine and 1,N2-ethenoguanine. Acts as a gatekeeper of genomic integrity under alkylation stress. Efficiently repairs alkylated lesions in ribosomal DNA (rDNA). These lesions can cause ss- and dsDNA strand breaks that severely impair rDNA transcription. In a response mechanism to DNA damage, associates with PCNA at replication forks to repair alkylated adducts prior to replication. The polypeptide is DNA oxidative demethylase ALKBH2 (ALKBH2) (Homo sapiens (Human)).